The primary structure comprises 191 residues: Chorion class B protein Ld34 (191 aa).

An N-terminal signal peptide occupies residues Met-1–Ser-21.

The protein belongs to the chorion protein family.

Its function is as follows. This protein is one of many from the eggshell of the gypsy moth. The protein is Chorion class B protein Ld34 of Lymantria dispar (Gypsy moth).